Consider the following 229-residue polypeptide: Ribonuclease 3 (229 aa).

The RNase III domain occupies 5–127 (LARLERQLGY…LIGAIYLDAG (123 aa)). E40 is a binding site for Mg(2+). The active site involves D44. Mg(2+) contacts are provided by D113 and E116. The active site involves E116. In terms of domain architecture, DRBM spans 154 to 224 (DPKTRLQEFL…AAAALIALGV (71 aa)).

Belongs to the ribonuclease III family. Homodimer. It depends on Mg(2+) as a cofactor.

It is found in the cytoplasm. The catalysed reaction is Endonucleolytic cleavage to 5'-phosphomonoester.. Digests double-stranded RNA. Involved in the processing of primary rRNA transcript to yield the immediate precursors to the large and small rRNAs (23S and 16S). Processes some mRNAs, and tRNAs when they are encoded in the rRNA operon. Processes pre-crRNA and tracrRNA of type II CRISPR loci if present in the organism. This chain is Ribonuclease 3, found in Pseudomonas fluorescens (strain SBW25).